Reading from the N-terminus, the 250-residue chain is uncharacterized protein (250 aa).

Residue Lys-17 forms a Glycyl lysine isopeptide (Lys-Gly) (interchain with G-Cter in ubiquitin) linkage. The tract at residues 30–67 (REEDYVATSKDNIHHHPCDWSAKPSQRQNENEQKSTIR) is disordered.

This is an uncharacterized protein from Saccharomyces cerevisiae (strain ATCC 204508 / S288c) (Baker's yeast).